A 174-amino-acid polypeptide reads, in one-letter code: Crossover junction endodeoxyribonuclease RuvC (174 aa).

Active-site residues include Asp8, Glu67, and Asp139. Mg(2+)-binding residues include Asp8, Glu67, and Asp139.

Belongs to the RuvC family. Homodimer which binds Holliday junction (HJ) DNA. The HJ becomes 2-fold symmetrical on binding to RuvC with unstacked arms; it has a different conformation from HJ DNA in complex with RuvA. In the full resolvosome a probable DNA-RuvA(4)-RuvB(12)-RuvC(2) complex forms which resolves the HJ. It depends on Mg(2+) as a cofactor.

The protein localises to the cytoplasm. The enzyme catalyses Endonucleolytic cleavage at a junction such as a reciprocal single-stranded crossover between two homologous DNA duplexes (Holliday junction).. In terms of biological role, the RuvA-RuvB-RuvC complex processes Holliday junction (HJ) DNA during genetic recombination and DNA repair. Endonuclease that resolves HJ intermediates. Cleaves cruciform DNA by making single-stranded nicks across the HJ at symmetrical positions within the homologous arms, yielding a 5'-phosphate and a 3'-hydroxyl group; requires a central core of homology in the junction. The consensus cleavage sequence is 5'-(A/T)TT(C/G)-3'. Cleavage occurs on the 3'-side of the TT dinucleotide at the point of strand exchange. HJ branch migration catalyzed by RuvA-RuvB allows RuvC to scan DNA until it finds its consensus sequence, where it cleaves and resolves the cruciform DNA. This chain is Crossover junction endodeoxyribonuclease RuvC, found in Ectopseudomonas mendocina (strain ymp) (Pseudomonas mendocina).